Here is a 158-residue protein sequence, read N- to C-terminus: Large ribosomal subunit protein uL11 (158 aa).

The segment at 1–21 (MAQSVKTMVEGGKATTGPPIG) is disordered.

It belongs to the universal ribosomal protein uL11 family. In terms of assembly, part of the ribosomal stalk of the 50S ribosomal subunit. Interacts with L10 and the large rRNA to form the base of the stalk. L10 forms an elongated spine to which L12 dimers bind in a sequential fashion forming a multimeric L10(L12)X complex.

Its function is as follows. Forms part of the ribosomal stalk which helps the ribosome interact with GTP-bound translation factors. The sequence is that of Large ribosomal subunit protein uL11 from Thermoplasma volcanium (strain ATCC 51530 / DSM 4299 / JCM 9571 / NBRC 15438 / GSS1).